The chain runs to 306 residues: Serine/threonine-protein phosphatase PP2A-1 catalytic subunit (306 aa).

Mn(2+) contacts are provided by Asp54, His56, Asp82, and Asn114. The active-site Proton donor is the His115. 2 residues coordinate Mn(2+): His164 and His238. Leucine methyl ester is present on Leu306.

Belongs to the PPP phosphatase family. PP-2A subfamily. PP2A consists of a common heterodimeric core enzyme, composed of a 36 kDa catalytic subunit (subunit C) and a 65 kDa constant regulatory subunit (subunit A), that associates with a variety of regulatory subunits such as subunits B (the R2/B/PR55/B55, R3/B''/PR72/PR130/PR59 and R5/B'/B56 families). Interacts with TAF12B. Interacts with SRK2E/OST1. Interacts with TAP46. It depends on Mn(2+) as a cofactor. In terms of processing, reversibly methyl esterified on Leu-306 by leucine carboxyl methyltransferase 1 (LCMT1) and pectin methylesterase 1 (PME1). Carboxyl methylation influences the affinity of the catalytic subunit for the different regulatory subunits, thereby modulating the PP2A holoenzyme's substrate specificity, enzyme activity and cellular localization. Phosphorylation of either threonine (by autophosphorylation-activated protein kinase) or tyrosine results in inactivation of the phosphatase. Auto-dephosphorylation has been suggested as a mechanism for reactivation.

Its subcellular location is the cytoplasm. The catalysed reaction is O-phospho-L-seryl-[protein] + H2O = L-seryl-[protein] + phosphate. It catalyses the reaction O-phospho-L-threonyl-[protein] + H2O = L-threonyl-[protein] + phosphate. This Arabidopsis thaliana (Mouse-ear cress) protein is Serine/threonine-protein phosphatase PP2A-1 catalytic subunit.